Reading from the N-terminus, the 339-residue chain is Ribonucleoside-diphosphate reductase subunit beta (339 aa).

Fe cation contacts are provided by D87 and H121. Y125 is an active-site residue. H215 is a binding site for Fe cation.

The protein belongs to the ribonucleoside diphosphate reductase small chain family. Tetramer of two alpha and two beta subunits. It depends on Fe cation as a cofactor.

The enzyme catalyses a 2'-deoxyribonucleoside 5'-diphosphate + [thioredoxin]-disulfide + H2O = a ribonucleoside 5'-diphosphate + [thioredoxin]-dithiol. Functionally, provides the precursors necessary for DNA synthesis. Catalyzes the biosynthesis of deoxyribonucleotides from the corresponding ribonucleotides. The chain is Ribonucleoside-diphosphate reductase subunit beta (nrdF) from Mycoplasmoides gallisepticum (strain R(low / passage 15 / clone 2)) (Mycoplasma gallisepticum).